We begin with the raw amino-acid sequence, 43 residues long: Defensin-B (43 aa).

Intrachain disulfides connect cysteine 3–cysteine 34, cysteine 20–cysteine 39, and cysteine 24–cysteine 41.

The protein resides in the secreted. Functionally, antibacterial protein. Strong activity against the Gram-positive bacteria M.luteus, B.megaterium and S.aureus. Reduced activity against Gram-positive bacterium B.subtilis and weak activity against Gram-negative bacterium X.japonicus. No detectable activity against the Gram-negative bacteria E.asbriae, E.coli, P.aeruginosa and S.marcescens. The protein is Defensin-B of Anomala cuprea (Cupreous chafer beetle).